Consider the following 148-residue polypeptide: Large ribosomal subunit protein uL15 (148 aa).

The span at 1 to 30 shows a compositional bias: basic residues; it reads MTHSKRNTRKLRGHVSHGHGRVGKHRKHPG. The tract at residues 1-38 is disordered; it reads MTHSKRNTRKLRGHVSHGHGRVGKHRKHPGGRGMAGPE.

This sequence belongs to the universal ribosomal protein uL15 family.

This Euplotes crassus protein is Large ribosomal subunit protein uL15 (RPL27A).